The chain runs to 121 residues: B-box domain protein 31 (121 aa).

Residues 26–72 (SVPVRCELCDGDASVFCEADSAFLCRKCDRWVHGANFLAWRHVRRVL) form a B box-type; atypical zinc finger. The PFVFL signature appears at 117 to 121 (PFVFL).

Highly expressed in shoot apical meristems and in vascular tissues of leaves. Also detected in petioles.

Its function is as follows. Developmental regulator acting by forming heterodimeric complexes, that sequester CO and CO-like (COL) proteins into non-functional complexes. Involved in the CO-mediated long-day flowering-promotion pathway. Engages CO and the transcriptional repressor TPL in a tripartite complex. The polypeptide is B-box domain protein 31 (Arabidopsis thaliana (Mouse-ear cress)).